The primary structure comprises 237 residues: Pyridoxal 5'-phosphate synthase subunit PdxS (237 aa).

Residue Lys19 is the Schiff-base intermediate with D-ribose 5-phosphate of the active site. Gly91 is a D-ribose 5-phosphate binding site. Residue Arg103 coordinates D-glyceraldehyde 3-phosphate. Residues Gly157 and 178–179 (GS) contribute to the D-ribose 5-phosphate site.

The protein belongs to the PdxS/SNZ family. In the presence of PdxT, forms a dodecamer of heterodimers.

It carries out the reaction aldehydo-D-ribose 5-phosphate + D-glyceraldehyde 3-phosphate + L-glutamine = pyridoxal 5'-phosphate + L-glutamate + phosphate + 3 H2O + H(+). It participates in cofactor biosynthesis; pyridoxal 5'-phosphate biosynthesis. In terms of biological role, catalyzes the formation of pyridoxal 5'-phosphate from ribose 5-phosphate (RBP), glyceraldehyde 3-phosphate (G3P) and ammonia. The ammonia is provided by the PdxT subunit. Can also use ribulose 5-phosphate and dihydroxyacetone phosphate as substrates, resulting from enzyme-catalyzed isomerization of RBP and G3P, respectively. This is Pyridoxal 5'-phosphate synthase subunit PdxS from Methanococcus vannielii.